Reading from the N-terminus, the 613-residue chain is MAEGGAGFSSSSTSSEEAVPWSTQQPMGWEELESLGDGGGSTSADEEFQWEAMFVKSRAGSPTAEDKSRTFTLPRGRPKNEPRPERGKGKTPKKPKKPDQGATLLVGEEPRPRLGSRTRSKSRSRDKHQLPDDIYDVPNPPMLAPVDSYGNPVEQVSSSESDFEDIANIRPILRRQQPVTVKHRREPSPEPLGHPTFVHRYDKPSYDEEVCQKKDKGGRTKSKNWLRQPGVKSKLTSMKDLSGSFKSLMHIRSDGEKHKQQQRPGGSGAPGGATPRDVFNTFLGSGTCPSFKNAFFLYLEGSMGVGKTTLIRHMREINGDNVISFVEPMFYWREVYSDCVKLIYSACKPFNLGKMSTSNKVLSAQMKFMTPMKCLQTSVRRYVKANEPLQEKTAMDNWLLFDRHPLSATLVFPYLSLKNGYLAFEHFLALAANFTAHEGDIIALLCMGEEDNLKMVKLRNRKGESGVTSAHLKDLGQAFHACYCTWLLLKYLSPEDMVSVCCCDVTLNDICIMRSMSSSKVTMAKSLFNKSMFPTLMDVIQPFRSNCTIIEICLTLFMELKKVEFIVVNASEFIGDIPGVWTSIYTQSLRTQAIKTQSIDWSGLRAFSLTYNS.

Disordered stretches follow at residues 1–233 (MAEG…GVKS) and 253–276 (SDGE…ATPR). The span at 8–18 (FSSSSTSSEEA) shows a compositional bias: low complexity. The segment covering 78-88 (PKNEPRPERGK) has biased composition (basic and acidic residues). Positions 114 to 126 (LGSRTRSKSRSRD) are enriched in basic residues. Over residues 199–218 (HRYDKPSYDEEVCQKKDKGG) the composition is skewed to basic and acidic residues. 301-308 (GSMGVGKT) serves as a coordination point for ATP. Catalysis depends on glutamate 327, which acts as the Proton acceptor. Residues tyrosine 344, glutamine 365, and arginine 461 each coordinate substrate.

Belongs to the herpesviridae thymidine kinase family. Homodimer.

The catalysed reaction is thymidine + ATP = dTMP + ADP + H(+). In terms of biological role, catalyzes the transfer of the gamma-phospho group of ATP to thymidine to generate dTMP in the salvage pathway of pyrimidine synthesis. The dTMP serves as a substrate for DNA polymerase during viral DNA replication. Allows the virus to be reactivated and to grow in non-proliferative cells lacking a high concentration of phosphorylated nucleic acid precursors. This is Thymidine kinase from Equine herpesvirus 2 (strain 86/87) (EHV-2).